Here is a 253-residue protein sequence, read N- to C-terminus: Uracil-DNA glycosylase (253 aa).

The active-site Proton acceptor is aspartate 79.

The protein belongs to the uracil-DNA glycosylase (UDG) superfamily. UNG family.

Its subcellular location is the cytoplasm. It carries out the reaction Hydrolyzes single-stranded DNA or mismatched double-stranded DNA and polynucleotides, releasing free uracil.. Functionally, excises uracil residues from the DNA which can arise as a result of misincorporation of dUMP residues by DNA polymerase or due to deamination of cytosine. The chain is Uracil-DNA glycosylase from Xylella fastidiosa (strain 9a5c).